We begin with the raw amino-acid sequence, 508 residues long: Photosystem II CP47 reaction center protein (508 aa).

Transmembrane regions (helical) follow at residues 21 to 36 (AVHI…WAGS), 101 to 115 (IVFS…IWHW), 140 to 156 (GIHL…FGAF), 203 to 218 (IAAG…FHLS), 237 to 252 (VLSS…AFVV), and 457 to 472 (SFAL…HGSR).

It belongs to the PsbB/PsbC family. PsbB subfamily. As to quaternary structure, PSII is composed of 1 copy each of membrane proteins PsbA, PsbB, PsbC, PsbD, PsbE, PsbF, PsbH, PsbI, PsbJ, PsbK, PsbL, PsbM, PsbT, PsbX, PsbY, PsbZ, Psb30/Ycf12, at least 3 peripheral proteins of the oxygen-evolving complex and a large number of cofactors. It forms dimeric complexes. It depends on Binds multiple chlorophylls. PSII binds additional chlorophylls, carotenoids and specific lipids. as a cofactor.

It is found in the plastid. It localises to the chloroplast thylakoid membrane. In terms of biological role, one of the components of the core complex of photosystem II (PSII). It binds chlorophyll and helps catalyze the primary light-induced photochemical processes of PSII. PSII is a light-driven water:plastoquinone oxidoreductase, using light energy to abstract electrons from H(2)O, generating O(2) and a proton gradient subsequently used for ATP formation. The polypeptide is Photosystem II CP47 reaction center protein (Populus trichocarpa (Western balsam poplar)).